Consider the following 348-residue polypeptide: DnaJ homolog subfamily B member 5 (348 aa).

Positions 4–68 constitute a J domain; that stretch reads DYYKILGIPS…KKRGLYDQYG (65 aa).

This chain is DnaJ homolog subfamily B member 5 (DNAJB5), found in Homo sapiens (Human).